Here is a 159-residue protein sequence, read N- to C-terminus: UPF0336 protein ML1910 (159 aa).

The protein belongs to the UPF0336 family.

The sequence is that of UPF0336 protein ML1910 from Mycobacterium leprae (strain TN).